The primary structure comprises 114 residues: Large ribosomal subunit protein bL19 (114 aa).

It belongs to the bacterial ribosomal protein bL19 family.

Functionally, this protein is located at the 30S-50S ribosomal subunit interface and may play a role in the structure and function of the aminoacyl-tRNA binding site. This Bacillus mycoides (strain KBAB4) (Bacillus weihenstephanensis) protein is Large ribosomal subunit protein bL19.